The sequence spans 476 residues: Adenosylhomocysteinase (476 aa).

Substrate-binding residues include T61, D140, and E200. An NAD(+)-binding site is contributed by 201-203 (TTT). Positions 230 and 234 each coordinate substrate. Residues N235, 264–269 (GYGDVG), E287, N322, 343–345 (IGH), and N389 contribute to the NAD(+) site.

This sequence belongs to the adenosylhomocysteinase family. It depends on NAD(+) as a cofactor.

Its subcellular location is the cytoplasm. The enzyme catalyses S-adenosyl-L-homocysteine + H2O = L-homocysteine + adenosine. It functions in the pathway amino-acid biosynthesis; L-homocysteine biosynthesis; L-homocysteine from S-adenosyl-L-homocysteine: step 1/1. Functionally, may play a key role in the regulation of the intracellular concentration of adenosylhomocysteine. The sequence is that of Adenosylhomocysteinase from Acidovorax sp. (strain JS42).